We begin with the raw amino-acid sequence, 242 residues long: N-alpha-acetyltransferase 60 (242 aa).

Residues 1–192 (MTEAVPSSAL…GGHPPWTILD (192 aa)) are Cytoplasmic-facing. An N-acetyltransferase domain is found at 13 to 182 (VSLRLLCHDD…DGFTYVLYIN (170 aa)). Tyr-38 serves as a coordination point for substrate. Lys-79 is subject to N6-acetyllysine; by autocatalysis. Tyr-97 is an active-site residue. A substrate-binding site is contributed by Leu-99. Position 101–103 (101–103 (LGV)) interacts with acetyl-CoA. Lys-105, Lys-109, and Lys-121 each carry N6-acetyllysine; by autocatalysis. Acetyl-CoA is bound at residue 109–114 (KHGIGS). The active site involves His-138. Acetyl-CoA is bound by residues Asn-143 and 150–153 (YENR). The residue at position 156 (Lys-156) is an N6-acetyllysine; by autocatalysis. The segment at 162–173 (PYYYSIRGVLKD) is required for homodimerization. Tyr-165 is a binding site for substrate. Positions 193–236 (YIQHLGSALANLSPCSIPHRIYRQAQSLLCSFLPWSSISTKGGI) form an intramembrane region, helical. Over 237-242 (EYSRTM) the chain is Cytoplasmic.

This sequence belongs to the acetyltransferase family. NAA60 subfamily. As to quaternary structure, monomer and homodimer; monomer in presence of substrate and homodimer in its absence. Acetylated: autoacetylation is required for optimal acetyltransferase activity.

It localises to the golgi apparatus membrane. The enzyme catalyses N-terminal L-methionyl-[transmembrane protein] + acetyl-CoA = N-terminal N(alpha)-acetyl-L-methionyl-[transmembrane protein] + CoA + H(+). It catalyses the reaction L-lysyl-[protein] + acetyl-CoA = N(6)-acetyl-L-lysyl-[protein] + CoA + H(+). Functionally, N-alpha-acetyltransferase that specifically mediates the acetylation of N-terminal residues of the transmembrane proteins, with a strong preference for N-termini facing the cytosol. Displays N-terminal acetyltransferase activity towards a range of N-terminal sequences including those starting with Met-Lys, Met-Val, Met-Ala and Met-Met. Required for normal chromosomal segregation during anaphase. May also show histone acetyltransferase activity; such results are however unclear in vivo and would require additional experimental evidences. This is N-alpha-acetyltransferase 60 (NAA60) from Bos taurus (Bovine).